The primary structure comprises 688 residues: Chaperone protein dnaK1 (688 aa).

Thr-198 is modified (phosphothreonine; by autocatalysis). Positions 630-661 (DLPRDSYRERDAYNNRDYGRDYGRDYGRDSRP) are enriched in basic and acidic residues. Residues 630 to 688 (DLPRDSYRERDAYNNRDYGRDYGRDYGRDSRPSYDNSRPPRKSPRPSYQDNWDDDDDWL) are disordered.

The protein belongs to the heat shock protein 70 family.

In terms of biological role, acts as a chaperone. This chain is Chaperone protein dnaK1 (dnaK1), found in Nostoc sp. (strain PCC 7120 / SAG 25.82 / UTEX 2576).